Reading from the N-terminus, the 314-residue chain is Methionyl-tRNA formyltransferase (314 aa).

110-113 (SLLP) lines the (6S)-5,6,7,8-tetrahydrofolate pocket.

Belongs to the Fmt family.

It carries out the reaction L-methionyl-tRNA(fMet) + (6R)-10-formyltetrahydrofolate = N-formyl-L-methionyl-tRNA(fMet) + (6S)-5,6,7,8-tetrahydrofolate + H(+). Its function is as follows. Attaches a formyl group to the free amino group of methionyl-tRNA(fMet). The formyl group appears to play a dual role in the initiator identity of N-formylmethionyl-tRNA by promoting its recognition by IF2 and preventing the misappropriation of this tRNA by the elongation apparatus. The chain is Methionyl-tRNA formyltransferase from Lactobacillus gasseri (strain ATCC 33323 / DSM 20243 / BCRC 14619 / CIP 102991 / JCM 1131 / KCTC 3163 / NCIMB 11718 / NCTC 13722 / AM63).